Consider the following 577-residue polypeptide: MGLCHGKPIEQQSKNLPISNEIEETPKNSSQKAKSSGFPFYSPSPLPSLFKTSPAVSSSSVSSTPLRIFKRPFPPPSPAKHIRALLARRHGSVKPNEASIPEGSECEVGLDKKFGFSKQFASHYEIDGEVGRGHFGYTCSAKGKKGSLKGQDVAVKVIPKSKMTTAIAIEDVRREVKILRALTGHKNLVQFYDAFEDDENVYIVMELCQGGELLDKILQRGGKYSEVDAKKVMIQILSVVAYCHLQGVVHRDLKPENFLFTTKDESSPLKAIDFGLSDYVRPDERLNDIVGSAYYVAPEVLHRTYGTEADMWSIGVIAYILLCGSRPFWARSESGIFRAVLKAEPNFEEAPWPSLSPDAVDFVKRLLNKDYRKRLTAAQALCHPWLVGSHELKIPSDMIIYKLVKVYIMSSSLRKSALAALAKTLTVPQLTYLQEQFNLLGPSKNGYISMQNYKTAILKSSTEATKDSRVLDFVHMISCLQYKKLDFEEFCASALSVYQLEAMETWEQHARRAYELYEKDGNRVIMIEELATELGLGPSVPVHVVLQDWIRHSDGKLSFLGFVRLLHGVSSRTLQKA.

A disordered region spans residues 1–38; that stretch reads MGLCHGKPIEQQSKNLPISNEIEETPKNSSQKAKSSGF. G2 is lipidated: N-myristoyl glycine. Residues 124-386 form the Protein kinase domain; that stretch reads YEIDGEVGRG…AAQALCHPWL (263 aa). Residues 130 to 138 and K156 contribute to the ATP site; that span reads VGRGHFGYT. D252 (proton acceptor) is an active-site residue. A Phosphoserine modification is found at S292. A Phosphoserine; by CPK1, CPK10 and CPK34 modification is found at S334. Residues 391-421 form an autoinhibitory domain region; sequence ELKIPSDMIIYKLVKVYIMSSSLRKSALAAL. Residues 410–430 form a calmodulin binding (CaMBD) region; sequence SSSLRKSALAALAKTLTVPQL. EF-hand domains lie at 428–464, 465–500, 501–540, and 543–572; these read PQLTYLQEQFNLLGPSKNGYISMQNYKTAILKSSTEA, TKDSRVLDFVHMISCLQYKKLDFEEFCASALSVYQL, EAMETWEQHARRAYELYEKDGNRVIMIEELATELGLGPSV, and HVVLQDWIRHSDGKLSFLGFVRLLHGVSSR. Positions 443, 445, 447, 484, 489, 520, 522, 529, 554, and 556 each coordinate Ca(2+). At S558 the chain carries Phosphoserine.

It belongs to the protein kinase superfamily. Ser/Thr protein kinase family. CDPK subfamily. As to quaternary structure, binds calmodulin (CaM) in a calcium-dependent manner. Autophosphorylated.

It localises to the membrane. It catalyses the reaction L-seryl-[protein] + ATP = O-phospho-L-seryl-[protein] + ADP + H(+). The enzyme catalyses L-threonyl-[protein] + ATP = O-phospho-L-threonyl-[protein] + ADP + H(+). Activated by calcium and calmodulin. Autophosphorylation may play an important role in the regulation of the kinase activity. Functionally, may play a role in signal transduction pathways that involve calcium as a second messenger. In Arabidopsis thaliana (Mouse-ear cress), this protein is CDPK-related kinase 7 (CRK7).